Reading from the N-terminus, the 386-residue chain is Hydrazine synthase subunit beta (386 aa).

The first 34 residues, 1–34 (MVIRRKMNKMIRKGMIGAVMLGAAVAISGGVATA), serve as a signal peptide directing secretion.

Part of the hydrazine synthase complex that forms an elongated dimer of heterotrimers composed of one alpha, one beta and one gamma subunit.

The protein resides in the anammoxosome. Its pathway is nitrogen metabolism. Functionally, component of the hydrazine synthase complex that catalyzes the condensation of nitric oxide (NO) with ammonium to form hydrazine. The beta subunit may play a role in modulating transport of the hydroxylamine intermediate through a tunnel between the gamma and alpha subunit's active site. Is involved in anaerobic ammonium oxidation (anammox), a biological process in which nitrite is used as the electron acceptor in the conversion of ammonium to dinitrogen gas (N2) and water; this bacterial process has a major role in the Earth's nitrogen cycle and has been estimated to synthesize up to 50% of the dinitrogen gas emitted into our atmosphere from the oceans. This chain is Hydrazine synthase subunit beta, found in Kuenenia stuttgartiensis.